We begin with the raw amino-acid sequence, 202 residues long: MENMAFNQRTVVMIGPGEHYVTAKNEVIKTLLGSCVAVCLYDPKAQVIGMNHFLLAADRRKFTHFLDSRAGYYGVHAMEILINAMLKRGAQRKYLQSKIFGGANVLSLCADNILNHYDIGGMNIDFVRHFLQRERIPIISEDIGGHCGRVIYFDPTDYSVYRSLIEHKYEEIASLQDEEYRYFNQASEDIHSSGVPVVIWSD.

This sequence belongs to the CheD family.

The enzyme catalyses L-glutaminyl-[protein] + H2O = L-glutamyl-[protein] + NH4(+). In terms of biological role, probably deamidates glutamine residues to glutamate on methyl-accepting chemotaxis receptors (MCPs), playing an important role in chemotaxis. The chain is Probable chemoreceptor glutamine deamidase CheD 2 from Shewanella oneidensis (strain ATCC 700550 / JCM 31522 / CIP 106686 / LMG 19005 / NCIMB 14063 / MR-1).